Here is a 237-residue protein sequence, read N- to C-terminus: Phosphoribosylaminoimidazole-succinocarboxamide synthase (237 aa).

This sequence belongs to the SAICAR synthetase family.

The enzyme catalyses 5-amino-1-(5-phospho-D-ribosyl)imidazole-4-carboxylate + L-aspartate + ATP = (2S)-2-[5-amino-1-(5-phospho-beta-D-ribosyl)imidazole-4-carboxamido]succinate + ADP + phosphate + 2 H(+). It functions in the pathway purine metabolism; IMP biosynthesis via de novo pathway; 5-amino-1-(5-phospho-D-ribosyl)imidazole-4-carboxamide from 5-amino-1-(5-phospho-D-ribosyl)imidazole-4-carboxylate: step 1/2. This chain is Phosphoribosylaminoimidazole-succinocarboxamide synthase, found in Deinococcus deserti (strain DSM 17065 / CIP 109153 / LMG 22923 / VCD115).